The following is a 321-amino-acid chain: Cyclic AMP-AMP-AMP synthase (321 aa).

ATP is bound at residue Lys63. Asp72 and Asp74 together coordinate Mg(2+). Residues Asp74, His162, Lys185, 201 to 203 (KSF), and Asn270 each bind ATP.

It belongs to the CD-NTase family. A01 subfamily. Forms complexes with Cap7 with 1:1 and 2:2 stoichimetry, and a 1:1:6 CdnC:Cap7:Cap6 complex. Mg(2+) is required as a cofactor.

It carries out the reaction 3 ATP = 3',3',3'-c-tri-AMP + 3 diphosphate. It catalyses the reaction 2 ATP = 3',3'-c-di-AMP + 2 diphosphate. The 2:2 CdnC:Cap7 (Cap7 is also called HORMA) complex is activated for cAAA synthesis by long dsDNA, but not 40 bp dsDNA or ssDNA; the 1:1 complex is inactive in vitro. The 2:2:DNA complex is catalytically disassembled and inactivated by Cap6 (also called Trip13). Its function is as follows. Cyclic nucleotide synthase (second messenger synthase) of a CBASS antivirus system. CBASS (cyclic oligonucleotide-based antiphage signaling system) provides immunity against bacteriophage. The CD-NTase protein synthesizes cyclic nucleotides in response to infection; these serve as specific second messenger signals. The signals activate a diverse range of effectors, leading to bacterial cell death and thus abortive phage infection. A type III-C(AAA) CBASS system. Functionally, cyclic nucleotide synthase that upon activation catalyzes the synthesis of 3',3',3'-cyclic AMP-AMP-AMP (3',3',3'-c-tri-AMP or cAAA) as the major product, and 3',3'-c-di-AMP as a minor product. Cannot use GTP as a substrate. Protects E.coli strain JP313 against bacteriophage lambda cI- infection. When the cdnC-cap7-cap6-nucC operon is transformed into a susceptible strain it confers bacteriophage immunity. Mutations in the sensor (Cap7 also called HORMA) or effector proteins (CdnC, NucC) but not the disassembly protein (Cap6 also called Trip13) no longer confer immunity. The presence of the intact operon leads to culture collapse and cell death, which occurs before the phage has finished its replication cycle, thus protecting non-infected bacteria by aborting the phage infection and preventing its propagation. The sequence is that of Cyclic AMP-AMP-AMP synthase from Escherichia coli (strain MS 115-1).